Consider the following 69-residue polypeptide: Conotoxin reg3.6 (69 aa).

An N-terminal signal peptide occupies residues 1-20 (MMSKLGVLLTICLLLFPLSA). Residues 21–52 (LPLDGDQPADQPAERVQDISPDQNPLFHLVKR) constitute a propeptide that is removed on maturation. Intrachain disulfides connect cysteine 54/cysteine 68, cysteine 55/cysteine 66, and cysteine 60/cysteine 69.

Belongs to the conotoxin M superfamily. In terms of tissue distribution, expressed by the venom duct.

Its subcellular location is the secreted. This is Conotoxin reg3.6 from Conus regius (Crown cone).